The sequence spans 363 residues: tRNA(Met) cytidine acetate ligase (363 aa).

Residues 7–20, G96, N152, and R175 contribute to the ATP site; that span reads IAEFNPFHNGHKYL.

The protein belongs to the TmcAL family.

The protein localises to the cytoplasm. It carries out the reaction cytidine(34) in elongator tRNA(Met) + acetate + ATP = N(4)-acetylcytidine(34) in elongator tRNA(Met) + AMP + diphosphate. In terms of biological role, catalyzes the formation of N(4)-acetylcytidine (ac(4)C) at the wobble position of elongator tRNA(Met), using acetate and ATP as substrates. First activates an acetate ion to form acetyladenylate (Ac-AMP) and then transfers the acetyl group to tRNA to form ac(4)C34. The polypeptide is tRNA(Met) cytidine acetate ligase (Streptococcus thermophilus (strain ATCC BAA-491 / LMD-9)).